A 108-amino-acid polypeptide reads, in one-letter code: Large ribosomal subunit protein eL30 (108 aa).

The protein belongs to the eukaryotic ribosomal protein eL30 family.

This is Large ribosomal subunit protein eL30 (rpl30e) from Saccharolobus solfataricus (strain ATCC 35092 / DSM 1617 / JCM 11322 / P2) (Sulfolobus solfataricus).